The following is a 233-amino-acid chain: ATP-dependent dethiobiotin synthetase BioD (233 aa).

Glutamate 12–tyrosine 17 lines the ATP pocket. Threonine 16 lines the Mg(2+) pocket. Residue lysine 37 is part of the active site. Residues aspartate 54, glutamate 120–glycine 123, and asparagine 186–aspartate 187 each bind ATP. The Mg(2+) site is built by aspartate 54 and glutamate 120.

Belongs to the dethiobiotin synthetase family. In terms of assembly, homodimer. Requires Mg(2+) as cofactor.

It is found in the cytoplasm. The catalysed reaction is (7R,8S)-7,8-diammoniononanoate + CO2 + ATP = (4R,5S)-dethiobiotin + ADP + phosphate + 3 H(+). Its pathway is cofactor biosynthesis; biotin biosynthesis; biotin from 7,8-diaminononanoate: step 1/2. Its function is as follows. Catalyzes a mechanistically unusual reaction, the ATP-dependent insertion of CO2 between the N7 and N8 nitrogen atoms of 7,8-diaminopelargonic acid (DAPA, also called 7,8-diammoniononanoate) to form a ureido ring. The sequence is that of ATP-dependent dethiobiotin synthetase BioD from Alteromonas mediterranea (strain DSM 17117 / CIP 110805 / LMG 28347 / Deep ecotype).